A 122-amino-acid chain; its full sequence is Small ribosomal subunit protein uS13 (122 aa).

Positions 99-122 (RGQRTHTNARTRKGPAKAIAGKKK) are disordered.

This sequence belongs to the universal ribosomal protein uS13 family. In terms of assembly, part of the 30S ribosomal subunit. Forms a loose heterodimer with protein S19. Forms two bridges to the 50S subunit in the 70S ribosome.

Located at the top of the head of the 30S subunit, it contacts several helices of the 16S rRNA. In the 70S ribosome it contacts the 23S rRNA (bridge B1a) and protein L5 of the 50S subunit (bridge B1b), connecting the 2 subunits; these bridges are implicated in subunit movement. Contacts the tRNAs in the A and P-sites. In Bradyrhizobium sp. (strain BTAi1 / ATCC BAA-1182), this protein is Small ribosomal subunit protein uS13.